The following is a 614-amino-acid chain: MAEFNIDELLKNVLEDPSTEISEETLKQLYQRTNPYKQFKNDSRVAFCSFTNLREQYIRRLIMTSLIGYVFKALQEWMPSYSKPTHTTKTLLSELITLVDTLKQETNDVPSESVVNTILAIADSCKTQTQKSKEAKTTIDSFLREHFVFDPNLHAQSAYTCASTNADTSASTNADTSASTNASINADTNVDTCASTNASTNVDTNASINASTNASTNVDTNASTNASINADTNVDTCASTNASTNVDTNASINASTNASTNVDTNADINANTNADINANINANTEYTDLTDPERIPLHIMQKTLNVPNELQADIDAITQTPQGYRAAAHILQNIELHQSVKHMLENPRAFKPILFNTKITRYLSQHIPPQDTFYKWNYYIEDNYEELRAATESIYPEKPDLEFAFIIYDVVDSSNQQKIDEFYYKYKDQIFSEVSSIQLGNWTLLGSFKANRERYNYFNQNNEVIKRILDRHEEDLKIGKEILRNTIYHKKAKNIQETGPDAPGLSIYNSTFHTDSGIKGLLSFKELKNLEKASGNVKKAREYDFIDECEEKIKQLLSKENLTSDEKSELIKTKKQLDNALEMLNVPDDTIRVDMWVNNNNKLEKEILYTKAEL.

A run of 31 repeats spans residues Cys-161–Thr-164, Asn-165–Thr-168, Ser-169–Thr-172, Asn-173–Thr-176, Ser-177–Thr-180, Asn-181–Ile-184, Asn-185–Thr-188, Asn-189–Thr-192, Cys-193–Thr-196, Asn-197–Thr-200, Asn-201–Thr-204, Asn-205–Ile-208, Asn-209–Thr-212, Asn-213–Thr-216, Asn-217–Thr-220, Asn-221–Thr-224, Asn-225–Ile-228, Asn-229–Thr-232, Asn-233–Thr-236, Cys-237–Thr-240, Asn-241–Thr-244, Asn-245–Thr-248, Asn-249–Ile-252, Asn-253–Thr-256, Asn-257–Thr-260, Asn-261–Thr-264, Asn-265–Ile-268, Asn-269–Thr-272, Asn-273–Ile-276, Asn-277–Ile-280, and Asn-281–Thr-284. The 28 X 4 AA tandem repeats of [CNS]-[AV]-[DNS]-[IT] stretch occupies residues Cys-161 to Thr-284.

It belongs to the asfivirus B602L family.

It is found in the host cytoplasm. Its function is as follows. Plays an essential role in the assembly of the icosahedral capsid of the virus. Allows the assembly of 3 molecules of hexon protein p72 and formation of a thermostable trimer. The protein is Protein B602L of African swine fever virus (isolate Tick/Malawi/Lil 20-1/1983) (ASFV).